Here is a 357-residue protein sequence, read N- to C-terminus: Membrane-bound lytic murein transglycosylase C (357 aa).

A signal peptide spans 1–17 (MKLKKFLVLLLIPFLYA). The N-palmitoyl cysteine moiety is linked to residue Cys18. A lipid anchor (S-diacylglycerol cysteine) is attached at Cys18.

It belongs to the transglycosylase Slt family.

It localises to the cell outer membrane. It carries out the reaction Exolytic cleavage of the (1-&gt;4)-beta-glycosidic linkage between N-acetylmuramic acid (MurNAc) and N-acetylglucosamine (GlcNAc) residues in peptidoglycan, from either the reducing or the non-reducing ends of the peptidoglycan chains, with concomitant formation of a 1,6-anhydrobond in the MurNAc residue.. Murein-degrading enzyme. May play a role in recycling of muropeptides during cell elongation and/or cell division. This is Membrane-bound lytic murein transglycosylase C from Mannheimia succiniciproducens (strain KCTC 0769BP / MBEL55E).